The sequence spans 402 residues: S-adenosylmethionine synthase (402 aa).

Residue H16 coordinates ATP. Residue D18 participates in Mg(2+) binding. E44 is a binding site for K(+). Residues E57 and Q103 each coordinate L-methionine. Residues 103–113 (QSPDIAQGVDT) form a flexible loop region. ATP is bound by residues 178-180 (DGK), 249-250 (KF), D258, 264-265 (RK), A281, and K285. D258 is a binding site for L-methionine. Residue K289 participates in L-methionine binding.

It belongs to the AdoMet synthase family. In terms of assembly, homotetramer; dimer of dimers. Mg(2+) serves as cofactor. Requires K(+) as cofactor.

The protein localises to the cytoplasm. It carries out the reaction L-methionine + ATP + H2O = S-adenosyl-L-methionine + phosphate + diphosphate. It participates in amino-acid biosynthesis; S-adenosyl-L-methionine biosynthesis; S-adenosyl-L-methionine from L-methionine: step 1/1. In terms of biological role, catalyzes the formation of S-adenosylmethionine (AdoMet) from methionine and ATP. The overall synthetic reaction is composed of two sequential steps, AdoMet formation and the subsequent tripolyphosphate hydrolysis which occurs prior to release of AdoMet from the enzyme. In Mycolicibacterium gilvum (strain PYR-GCK) (Mycobacterium gilvum (strain PYR-GCK)), this protein is S-adenosylmethionine synthase.